A 152-amino-acid polypeptide reads, in one-letter code: MVKAVAVLGSSDGVKGTIFFTQEGDGPTAVTGSVSGLKPGLHGFHVHALGDTTNGCMSTGPHYNPASKEHGAPEDENRHAGDLGNVTAGADGVANINVTDSQIPLTGPNSIIGRAVVVHADPDDLGKGGHELSKSTGNAGGRVACGIIGLQG.

H45, H47, and H62 together coordinate Cu cation. A disulfide bridge links C56 with C145. Zn(2+) is bound by residues H62, H70, H79, and D82. Residue H119 participates in Cu cation binding.

The protein belongs to the Cu-Zn superoxide dismutase family. In terms of assembly, homodimer. It depends on Cu cation as a cofactor. Requires Zn(2+) as cofactor.

The protein resides in the cytoplasm. It catalyses the reaction 2 superoxide + 2 H(+) = H2O2 + O2. Destroys radicals which are normally produced within the cells and which are toxic to biological systems. The sequence is that of Superoxide dismutase [Cu-Zn] 4AP (SODCC.2) from Zea mays (Maize).